The chain runs to 341 residues: UDP-N-acetylenolpyruvoylglucosamine reductase (341 aa).

The 171-residue stretch at 15–185 (VEQSCLSLIE…TAVGLRLPKA (171 aa)) folds into the FAD-binding PCMH-type domain. Residue Arg161 is part of the active site. Residue Ser231 is the Proton donor of the active site. Glu327 is an active-site residue.

It belongs to the MurB family. The cofactor is FAD.

The protein resides in the cytoplasm. The enzyme catalyses UDP-N-acetyl-alpha-D-muramate + NADP(+) = UDP-N-acetyl-3-O-(1-carboxyvinyl)-alpha-D-glucosamine + NADPH + H(+). It participates in cell wall biogenesis; peptidoglycan biosynthesis. Functionally, cell wall formation. The sequence is that of UDP-N-acetylenolpyruvoylglucosamine reductase from Shewanella sp. (strain ANA-3).